The following is a 469-amino-acid chain: 6-phosphofructo-2-kinase/fructose-2,6-bisphosphatase 4 (469 aa).

The interval 1-249 is 6-phosphofructo-2-kinase; it reads MASPRELTQN…YYLMNIHVTP (249 aa). Ser-29 carries the post-translational modification Phosphoserine; by PKC. 46–54 contacts ATP; it reads GLPARGKTY. Beta-D-fructose 6-phosphate contacts are provided by Arg-79 and Arg-103. Residue Asp-129 is part of the active site. Beta-D-fructose 6-phosphate-binding residues include Thr-131 and Arg-137. Cys-159 is an active-site residue. 168 to 173 is an ATP binding site; it reads NIVQVK. Lys-173, Arg-194, and Tyr-198 together coordinate beta-D-fructose 6-phosphate. The fructose-2,6-bisphosphatase stretch occupies residues 250-469; it reads RSIYLCRHGE…EALVTVPAHQ (220 aa). Arg-256 serves as a coordination point for beta-D-fructose 2,6-bisphosphate. Residue His-257 is the Tele-phosphohistidine intermediate of the active site. 3 residues coordinate beta-D-fructose 2,6-bisphosphate: Asn-263, Gly-269, and Arg-306. The active-site Proton donor/acceptor is Glu-326. Residues Tyr-337, Arg-351, Lys-355, Tyr-366, Gln-392, and Arg-396 each contribute to the beta-D-fructose 2,6-bisphosphate site. 348–351 serves as a coordination point for ATP; it reads FALR. ATP contacts are provided by residues 392–396 and Tyr-428; that span reads QAVMR. A Phosphothreonine; by PKC modification is found at Thr-444.

The protein in the C-terminal section; belongs to the phosphoglycerate mutase family. In terms of assembly, homodimer. As to expression, testis.

The catalysed reaction is beta-D-fructose 2,6-bisphosphate + H2O = beta-D-fructose 6-phosphate + phosphate. It carries out the reaction beta-D-fructose 6-phosphate + ATP = beta-D-fructose 2,6-bisphosphate + ADP + H(+). With respect to regulation, the most important regulatory mechanism of these opposing activities is by phosphorylation and dephosphorylation of the enzyme. In terms of biological role, synthesis and degradation of fructose 2,6-bisphosphate. In Rattus norvegicus (Rat), this protein is 6-phosphofructo-2-kinase/fructose-2,6-bisphosphatase 4 (Pfkfb4).